A 269-amino-acid chain; its full sequence is MNRIHAVILDWAGTTVDFGSFAPTQIFVEAFRQAFDVEITLAEARVPMGLGKWQHIEALGKLPAVDARWQAKFGRSMSAADIDAIYAAFMPLQIAKVVDFSSPIAGVIDTIAALRAEGIKIGSCSGYPRAVMERLVPAAAGHGYRPDHWVATDDLAAGGRPGPWMALQNVIALGIDAVAHCVKVDDAAPGISEGLNAGMWTVGLAVSGNEFGATWDAYQTMSKEDVAVRREHAASKLYAAGAHYVVDSLADLPGVIAHINARLAQGERP.

Asp-10 serves as the catalytic Nucleophile. The Mg(2+) site is built by Asp-10 and Ala-12. The Schiff-base intermediate with substrate role is filled by Lys-52. Asp-186 is a binding site for Mg(2+).

It belongs to the HAD-like hydrolase superfamily. PhnX family. Homodimer. It depends on Mg(2+) as a cofactor.

It carries out the reaction phosphonoacetaldehyde + H2O = acetaldehyde + phosphate + H(+). Functionally, involved in phosphonate degradation. This Salmonella typhimurium (strain LT2 / SGSC1412 / ATCC 700720) protein is Phosphonoacetaldehyde hydrolase (phnX).